The primary structure comprises 346 residues: MKTYNVAIVGASGAVGQELIKGLENSFFPIKKFVPLASTRSAGKKIKAFNKDYEILETTHEVFEREKIDIAFFSAGGSVSEEFATSASKTALVVDNTSFFRLNKDVPLVVPEINAKEIFNAPLNIIANPNCSTIQMTQILNPLHLHFKIKSVIVSTYQAVSGAGNKGIESLKNELKTALECLEKDPTIDLNQVLQAGAFAYPIAFNAIAHIDTFKENGYTKEELKMLHETHKIMGVDFPISATCVRVPVLRSHSESLSIAFEKEFDLKEVYEVLKNAPSVAVCDDPSHNLYPTPLKASHTDSVFIGRLRKDLFDKKTLHGFCVADQLRVGAATNALKIALHYIKNA.

NADP(+)-binding positions include 12–15 and 40–41; these read SGAV and RS. Arg-101 is a phosphate binding site. Cys-131 functions as the Acyl-thioester intermediate in the catalytic mechanism. Position 158 (Gln-158) interacts with substrate. Residue 161–162 participates in NADP(+) binding; the sequence is SG. Lys-225 lines the phosphate pocket. Substrate is bound at residue Arg-246. Residue His-253 is the Proton acceptor of the active site. An NADP(+)-binding site is contributed by Gln-326.

This sequence belongs to the aspartate-semialdehyde dehydrogenase family. As to quaternary structure, homodimer.

It carries out the reaction L-aspartate 4-semialdehyde + phosphate + NADP(+) = 4-phospho-L-aspartate + NADPH + H(+). It functions in the pathway amino-acid biosynthesis; L-lysine biosynthesis via DAP pathway; (S)-tetrahydrodipicolinate from L-aspartate: step 2/4. Its pathway is amino-acid biosynthesis; L-methionine biosynthesis via de novo pathway; L-homoserine from L-aspartate: step 2/3. The protein operates within amino-acid biosynthesis; L-threonine biosynthesis; L-threonine from L-aspartate: step 2/5. Functionally, catalyzes the NADPH-dependent formation of L-aspartate-semialdehyde (L-ASA) by the reductive dephosphorylation of L-aspartyl-4-phosphate. This chain is Aspartate-semialdehyde dehydrogenase, found in Helicobacter pylori (strain ATCC 700392 / 26695) (Campylobacter pylori).